A 209-amino-acid polypeptide reads, in one-letter code: dITP/XTP pyrophosphatase (209 aa).

7 to 12 (SSHGYK) contacts substrate. Aspartate 70 serves as the catalytic Proton acceptor. Aspartate 70 serves as a coordination point for Mg(2+). Substrate is bound by residues serine 71, 154-157 (FGYD), lysine 177, and 182-183 (HR).

Belongs to the HAM1 NTPase family. As to quaternary structure, homodimer. Mg(2+) is required as a cofactor.

It catalyses the reaction XTP + H2O = XMP + diphosphate + H(+). The enzyme catalyses dITP + H2O = dIMP + diphosphate + H(+). It carries out the reaction ITP + H2O = IMP + diphosphate + H(+). In terms of biological role, pyrophosphatase that catalyzes the hydrolysis of nucleoside triphosphates to their monophosphate derivatives, with a high preference for the non-canonical purine nucleotides XTP (xanthosine triphosphate), dITP (deoxyinosine triphosphate) and ITP. Seems to function as a house-cleaning enzyme that removes non-canonical purine nucleotides from the nucleotide pool, thus preventing their incorporation into DNA/RNA and avoiding chromosomal lesions. This chain is dITP/XTP pyrophosphatase, found in Chlamydia trachomatis serovar A (strain ATCC VR-571B / DSM 19440 / HAR-13).